The following is a 406-amino-acid chain: MFSKVRLLLNKELQRQRENICLIASENYVSQDILAVTGSVLTNKYAEGYPSKRFYQGCEVVDESENLAIESCKTLFGAQWANVQPHSGSSANYAVYLALLKPGDTILGLDLNCGGHLTHGSPVNFSGKQYQAVTYSLDFETETLDYDAILQIALEHKPKLIICGFSNYSRTVDFKKFSAIAKQVNAYLLADIAHIAGFIAAGLHQNPLPFVDVVTSTTHKTLRGPRGGIIMSNNQAIIKKLDSGVFPGCQGGPLQHVIAAKYVCFKEALNPKFKQYMQQVKDNALAMANWFLKQGYRVVSKGTETHLFSLVVGNGKDVALWLQKANIVLNMNTIPFETKSAFSPSGIRLGTPAMTTRGFKTNDFIFVASLIDKVIKSNGNQKVISQTKTAVLNLLKRFPLYKGLAY.

(6S)-5,6,7,8-tetrahydrofolate-binding positions include Leu-111 and 115-117 (GHL). Lys-220 is subject to N6-(pyridoxal phosphate)lysine. 340–342 (SAF) contributes to the (6S)-5,6,7,8-tetrahydrofolate binding site.

It belongs to the SHMT family. As to quaternary structure, homodimer. Requires pyridoxal 5'-phosphate as cofactor.

The protein localises to the cytoplasm. The catalysed reaction is (6R)-5,10-methylene-5,6,7,8-tetrahydrofolate + glycine + H2O = (6S)-5,6,7,8-tetrahydrofolate + L-serine. It participates in one-carbon metabolism; tetrahydrofolate interconversion. It functions in the pathway amino-acid biosynthesis; glycine biosynthesis; glycine from L-serine: step 1/1. In terms of biological role, catalyzes the reversible interconversion of serine and glycine with tetrahydrofolate (THF) serving as the one-carbon carrier. This reaction serves as the major source of one-carbon groups required for the biosynthesis of purines, thymidylate, methionine, and other important biomolecules. Also exhibits THF-independent aldolase activity toward beta-hydroxyamino acids, producing glycine and aldehydes, via a retro-aldol mechanism. The protein is Serine hydroxymethyltransferase of Mycoplasma genitalium (strain ATCC 33530 / DSM 19775 / NCTC 10195 / G37) (Mycoplasmoides genitalium).